We begin with the raw amino-acid sequence, 615 residues long: Dihydroxy-acid dehydratase (615 aa).

Aspartate 81 is a Mg(2+) binding site. Cysteine 122 serves as a coordination point for [2Fe-2S] cluster. Mg(2+)-binding residues include aspartate 123 and lysine 124. Lysine 124 carries the post-translational modification N6-carboxylysine. Position 195 (cysteine 195) interacts with [2Fe-2S] cluster. Glutamate 491 contributes to the Mg(2+) binding site. The active-site Proton acceptor is the serine 517.

This sequence belongs to the IlvD/Edd family. Homodimer. [2Fe-2S] cluster is required as a cofactor. It depends on Mg(2+) as a cofactor.

It catalyses the reaction (2R)-2,3-dihydroxy-3-methylbutanoate = 3-methyl-2-oxobutanoate + H2O. It carries out the reaction (2R,3R)-2,3-dihydroxy-3-methylpentanoate = (S)-3-methyl-2-oxopentanoate + H2O. It participates in amino-acid biosynthesis; L-isoleucine biosynthesis; L-isoleucine from 2-oxobutanoate: step 3/4. The protein operates within amino-acid biosynthesis; L-valine biosynthesis; L-valine from pyruvate: step 3/4. Functionally, functions in the biosynthesis of branched-chain amino acids. Catalyzes the dehydration of (2R,3R)-2,3-dihydroxy-3-methylpentanoate (2,3-dihydroxy-3-methylvalerate) into 2-oxo-3-methylpentanoate (2-oxo-3-methylvalerate) and of (2R)-2,3-dihydroxy-3-methylbutanoate (2,3-dihydroxyisovalerate) into 2-oxo-3-methylbutanoate (2-oxoisovalerate), the penultimate precursor to L-isoleucine and L-valine, respectively. The protein is Dihydroxy-acid dehydratase of Pseudoalteromonas atlantica (strain T6c / ATCC BAA-1087).